Here is a 550-residue protein sequence, read N- to C-terminus: Putative pentatricopeptide repeat-containing protein At5g37570 (550 aa).

12 PPR repeats span residues 73–107, 109–143, 144–174, 175–205, 206–240, 241–267, 268–302, 303–333, 339–369, 370–404, 405–435, and 441–475; these read GTYL…GLAR, DEYT…GFDK, DVVV…MPER, NAVS…MPER, NLGS…DIIS, YTSM…ARGV, DVRA…NVKP, DEFI…LHQR, SHYV…MPQR, DLVS…GIVP, DEVA…MRKK, and SPDH…AHAS. A type E motif region spans residues 476-550; it reads AWGSLLGGCS…KICGRSWISR (75 aa).

Belongs to the PPR family. PCMP-E subfamily.

In Arabidopsis thaliana (Mouse-ear cress), this protein is Putative pentatricopeptide repeat-containing protein At5g37570 (PCMP-E37).